A 1576-amino-acid chain; its full sequence is DExH-box ATP-dependent RNA helicase DExH2 (1576 aa).

The R3H domain occupies 15-78 (EATGAWATKV…ERRLSLFKGD (64 aa)). The region spanning 227 to 396 (ISAVESNQVV…FGGCPVVRVP (170 aa)) is the Helicase ATP-binding domain. An ATP-binding site is contributed by 240 to 247 (GETGCGKT). A DEIH box motif is present at residues 343 to 346 (DEIH). The Helicase C-terminal domain occupies 561–735 (LIVKLMKKIC…ELCLQVKMLD (175 aa)). Disordered regions lie at residues 1137–1165 (ATSPRDDIPSTNPNELREHDPNTTPMGSK), 1177–1223 (MEES…SLNN), and 1260–1576 (DMGN…PSDQ). The segment covering 1281 to 1301 (PNSANSMDLGNMEENTPSDLA) has biased composition (polar residues). The segment covering 1305-1319 (KKKEPKSVSKLDLGS) has biased composition (basic and acidic residues). The PH1 motif lies at 1349-1360 (KQPEKKRSRSKK). Residues 1352–1363 (EKKRSRSKKRKS) show a composition bias toward basic residues. A compositionally biased stretch (polar residues) spans 1381–1412 (ANENEQTEPKSANNLDLGNMKENTPSDLANEN). The PH2 motif lies at 1454–1465 (KQPKKKRSRSKK). Residues 1455–1467 (QPKKKRSRSKKCK) show a composition bias toward basic residues. A compositionally biased stretch (basic and acidic residues) spans 1490–1508 (EQKDPESVNRLDPGKEKES). Positions 1509–1524 (IPSNLVSGNEQPDSNT) are enriched in polar residues. The span at 1528–1537 (KKPKKKKRKL) shows a compositional bias: basic residues. Positions 1530-1537 (PKKKKRKL) match the Nuclear localization signal motif. A compositionally biased stretch (polar residues) spans 1540-1562 (NFDSVNNMEEKMPSTNVLSQGNK).

This sequence belongs to the DExH box helicase family. In terms of assembly, homodimer.

It is found in the nucleus. It carries out the reaction ATP + H2O = ADP + phosphate + H(+). In terms of biological role, may function as an ATP-dependent RNA/DNA helicase. Binds DNA in vitro in a non-specific manner. The chain is DExH-box ATP-dependent RNA helicase DExH2 from Arabidopsis thaliana (Mouse-ear cress).